The following is an 887-amino-acid chain: MKGLNAKPFSHEAVRQKLLSGRESLQRRYHQNRNGAALLRDHSRLVDGILRQVWHEMNMPGSTALLAVGGYGRRQLFPYSDIDLVVLLPDKGDAAEAMDNELGTRLEHWVGLLWDIGLDIGHSVRTVKECGEEAANDITVQTSLLEARLLGGNSDLFDRFLQVMETMLAPRKFFVDKQLEQQQRHKRYQDAPYKLEPNIKESPGGLRDLQNVLWISRAAGFGKTWSELAKKGFIIRREARLIQRQQTVLQDLRIRLHYLGGRREDRLLFDYQNPLAEELGIAAKPPRRPGEMLMQRYYRAARSVTQVNTILLLTLHAEIFPDEEAVTTIINERFQKRGDLLEICEEDIFERDPGAILESVLLLQQNPDLKGRSFATLRAMWRSAPLITASFRREPRHCAMFMEILRQPRGLTRELRLMNRYGILGRYIPAFGRIIGQMQHDLFHVYTVDEHILMVVRNLRRFMAPEFAYEYPLCSRLINEFERPELLYLAGLFHDIAKGRQGDHSLLGKVDARRFCERHRMPAEDTELVVWLVENHLHMSATAQKKDIADAEVIADFAASMRDERHLIALYLLTVSDIRGTSPKVWNAWKGKLLEDLFHRTRQYLCGETALTDISLENRKNKVLQLLHPDDAAMRAYERFWSGLDSSYLMMHDPREIAWHTQHLSQRMKSPAPIVKTRAAETGAGVEVLVYTADQKDLFARICSFFDGIDYNIVQAKIHTTREGYALDSFLVLDPFNVANHDPREFQFIEQELTQQLEQQALMATPVKGRLSRHLRHFPITPQVSIEPDDSGAYYVLSITAGDQSGLLSRIAQVLVRFGLNVHSARINTLGERAEDTFLVTGSILSNSRSVIQLEANLIKVLHTSPQPETPGKAPGKPSAGDRIIPR.

The tract at residues 1 to 329 (MKGLNAKPFS…FPDEEAVTTI (329 aa)) is uridylyltransferase. The segment at 330-686 (INERFQKRGD…TRAAETGAGV (357 aa)) is uridylyl-removing. The 123-residue stretch at 448-570 (VDEHILMVVR…MRDERHLIAL (123 aa)) folds into the HD domain. ACT domains follow at residues 687–772 (EVLV…GRLS) and 796–871 (VLSI…PETP). A disordered region spans residues 864-887 (TSPQPETPGKAPGKPSAGDRIIPR).

The protein belongs to the GlnD family. Mg(2+) is required as a cofactor.

The enzyme catalyses [protein-PII]-L-tyrosine + UTP = [protein-PII]-uridylyl-L-tyrosine + diphosphate. It carries out the reaction [protein-PII]-uridylyl-L-tyrosine + H2O = [protein-PII]-L-tyrosine + UMP + H(+). With respect to regulation, uridylyltransferase (UTase) activity is inhibited by glutamine, while glutamine activates uridylyl-removing (UR) activity. Functionally, modifies, by uridylylation and deuridylylation, the PII regulatory proteins (GlnB and homologs), in response to the nitrogen status of the cell that GlnD senses through the glutamine level. Under low glutamine levels, catalyzes the conversion of the PII proteins and UTP to PII-UMP and PPi, while under higher glutamine levels, GlnD hydrolyzes PII-UMP to PII and UMP (deuridylylation). Thus, controls uridylylation state and activity of the PII proteins, and plays an important role in the regulation of nitrogen assimilation and metabolism. The protein is Bifunctional uridylyltransferase/uridylyl-removing enzyme of Nitrosospira multiformis (strain ATCC 25196 / NCIMB 11849 / C 71).